We begin with the raw amino-acid sequence, 544 residues long: Pectinesterase 3 (544 aa).

N-linked (GlcNAc...) asparagine glycans are attached at residues N174, N257, and N291. Residues T306 and Q336 each contribute to the substrate site. The active-site Proton donor is D359. D380 acts as the Nucleophile in catalysis. Residues R448 and W450 each contribute to the substrate site. N-linked (GlcNAc...) asparagine glycosylation is present at N532.

This sequence in the N-terminal section; belongs to the PMEI family. The protein in the C-terminal section; belongs to the pectinesterase family.

Its subcellular location is the secreted. The protein localises to the cell wall. It carries out the reaction [(1-&gt;4)-alpha-D-galacturonosyl methyl ester](n) + n H2O = [(1-&gt;4)-alpha-D-galacturonosyl](n) + n methanol + n H(+). Its pathway is glycan metabolism; pectin degradation; 2-dehydro-3-deoxy-D-gluconate from pectin: step 1/5. Functionally, acts in the modification of cell walls via demethylesterification of cell wall pectin. This Solanum lycopersicum (Tomato) protein is Pectinesterase 3 (PME3).